The sequence spans 439 residues: Serine--tRNA ligase (439 aa).

247-249 (TSE) serves as a coordination point for L-serine. 278-280 (RSE) contacts ATP. E301 lines the L-serine pocket. Residue 365–368 (EISS) participates in ATP binding. L-serine is bound at residue S400.

This sequence belongs to the class-II aminoacyl-tRNA synthetase family. Type-1 seryl-tRNA synthetase subfamily. In terms of assembly, homodimer. The tRNA molecule binds across the dimer.

It localises to the cytoplasm. The catalysed reaction is tRNA(Ser) + L-serine + ATP = L-seryl-tRNA(Ser) + AMP + diphosphate + H(+). The enzyme catalyses tRNA(Sec) + L-serine + ATP = L-seryl-tRNA(Sec) + AMP + diphosphate + H(+). Its pathway is aminoacyl-tRNA biosynthesis; selenocysteinyl-tRNA(Sec) biosynthesis; L-seryl-tRNA(Sec) from L-serine and tRNA(Sec): step 1/1. In terms of biological role, catalyzes the attachment of serine to tRNA(Ser). Is also able to aminoacylate tRNA(Sec) with serine, to form the misacylated tRNA L-seryl-tRNA(Sec), which will be further converted into selenocysteinyl-tRNA(Sec). This is Serine--tRNA ligase from Paracidovorax citrulli (strain AAC00-1) (Acidovorax citrulli).